Here is a 333-residue protein sequence, read N- to C-terminus: Alpha-N-acetylgalactosaminide alpha-2,6-sialyltransferase 6 (333 aa).

The span at 1–12 shows a compositional bias: polar residues; it reads MACSRPPSQCEP. A disordered region spans residues 1-26; it reads MACSRPPSQCEPTSLPPGPPAGRRHL. Over 1–43 the chain is Cytoplasmic; it reads MACSRPPSQCEPTSLPPGPPAGRRHLPLSRRRREMSSNKEQRS. A helical; Signal-anchor for type II membrane protein membrane pass occupies residues 44 to 64; the sequence is AVFVILFALITILILYSSNSA. Residues 65-333 are Lumenal-facing; it reads NEVFHYGSLR…GITFSHPSWT (269 aa). N-linked (GlcNAc...) asparagine glycosylation occurs at Asn-98. The cysteines at positions 108 and 256 are disulfide-linked.

It belongs to the glycosyltransferase 29 family. In terms of tissue distribution, expressed in kidney, in proximal tubule epithelial cells. Expressed in colon cell lines.

Its subcellular location is the golgi apparatus membrane. The enzyme catalyses a ganglioside GM1b (d18:1(4E)) + CMP-N-acetyl-beta-neuraminate = a ganglioside GD1alpha (d18:1(4E)) + CMP + H(+). The catalysed reaction is N-acetyl-alpha-neuraminosyl-(2-&gt;3)-beta-D-galactosyl-(1-&gt;3)-N-acetyl-beta-D-glucosaminyl-(1-&gt;3)-beta-D-galactosyl-(1-&gt;4)-beta-D-glucosyl-(1&lt;-&gt;1')-N-acyl-sphing-4-enine + CMP-N-acetyl-beta-neuraminate = N-acetyl-alpha-neuraminosyl-(2-&gt;3)-beta-D-galactosyl-(1-&gt;3)-[N-acetyl-alpha-neuraminosyl-(2-&gt;6)]-N-acetyl-beta-D-glucosaminyl-(1-&gt;3)-beta-D-galactosyl-(1-&gt;4)-beta-D-glucosyl-(1&lt;-&gt;1')-N-acyl-sphing-4-enine + CMP + H(+). It catalyses the reaction a globoside MSGG + CMP-N-acetyl-beta-neuraminate = a globoside DSGG + CMP + H(+). It carries out the reaction a ganglioside GD1a (d18:1(4E)) + CMP-N-acetyl-beta-neuraminate = a ganglioside GT1aalpha (d18:1(4E)) + CMP + H(+). The enzyme catalyses a ganglioside GT1b (d18:1(4E)) + CMP-N-acetyl-beta-neuraminate = a ganglioside GQ1balpha (d18:1(4E)) + CMP + H(+). The catalysed reaction is 3-O-[alpha-Neu5Ac-(2-&gt;3)-beta-D-Gal-(1-&gt;3)-alpha-D-GalNAc]-L-Ser-[protein] + CMP-N-acetyl-beta-neuraminate = a 3-O-{alpha-Neu5Ac-(2-&gt;3)-beta-D-Gal-(1-&gt;3)-[alpha-Neu5Ac-(2-&gt;6)]-alpha-D-GalNAc}-L-seryl-[protein] + CMP + H(+). It catalyses the reaction 3-O-[alpha-Neu5Ac-(2-&gt;3)-beta-D-Gal-(1-&gt;3)-alpha-D-GalNAc]-L-Thr-[protein] + CMP-N-acetyl-beta-neuraminate = a 3-O-{alpha-Neu5Ac-(2-&gt;3)-beta-D-Gal-(1-&gt;3)-[alpha-Neu5Ac-(2-&gt;6)]-alpha-D-GalNAc}-L-threonyl-[protein] + CMP + H(+). In terms of biological role, transfers the sialyl group (N-acetyl-alpha-neuraminyl or NeuAc) from CMP-NeuAc onto glycoproteins and glycolipids, forming an alpha-2,6-linkage. Produces branched type disialyl structures by transfer of a sialyl group onto the GalNAc or GlcNAc residue inside backbone core chains having a terminal sialic acid with an alpha-2,3-linkage on Gal. ST6GalNAcVI prefers glycolipids to glycoproteins, predominantly catalyzing the biosynthesis of ganglioside GD1alpha from GM1b. Besides GMb1, MSGG and other glycolipids, it shows activity towards sialyl Lc4Cer generating disialyl Lc4Cer, which can lead to the synthesis of disialyl Lewis a (Le(a)), suggested to be a cancer-associated antigen. Also has activity toward GD1a and GT1b, and can generate DSGG (disialylgalactosylgloboside) from MSGG (monosialylgalactosylgloboside). This is Alpha-N-acetylgalactosaminide alpha-2,6-sialyltransferase 6 (ST6GALNAC6) from Homo sapiens (Human).